Here is a 148-residue protein sequence, read N- to C-terminus: Probable calcium-binding protein CML14 (148 aa).

EF-hand domains lie at 9 to 44, 80 to 115, and 116 to 148; these read DQVS…LGGN, PFDR…IGEK, and LQPS…MVAK. The Ca(2+) site is built by Asp-22, Asp-24, Asp-26, Lys-28, and Glu-33.

Functionally, potential calcium sensor. The polypeptide is Probable calcium-binding protein CML14 (CML14) (Arabidopsis thaliana (Mouse-ear cress)).